The following is a 356-amino-acid chain: tRNA N6-adenosine threonylcarbamoyltransferase (356 aa).

Positions 115 and 119 each coordinate Fe cation. Substrate-binding positions include 139-143 (LVSGG), Asp173, Gly186, Asp190, and Asn291. Asp319 serves as a coordination point for Fe cation.

It belongs to the KAE1 / TsaD family. Fe(2+) is required as a cofactor.

Its subcellular location is the cytoplasm. The catalysed reaction is L-threonylcarbamoyladenylate + adenosine(37) in tRNA = N(6)-L-threonylcarbamoyladenosine(37) in tRNA + AMP + H(+). Required for the formation of a threonylcarbamoyl group on adenosine at position 37 (t(6)A37) in tRNAs that read codons beginning with adenine. Is involved in the transfer of the threonylcarbamoyl moiety of threonylcarbamoyl-AMP (TC-AMP) to the N6 group of A37, together with TsaE and TsaB. TsaD likely plays a direct catalytic role in this reaction. This is tRNA N6-adenosine threonylcarbamoyltransferase from Arthrobacter sp. (strain FB24).